A 429-amino-acid chain; its full sequence is MREELIQGLLDFLNASPTPFHATTSLAMRLEAAGYRHLDERAPWHTEAGGRYYVTRNDSSIIAFKLGKRPVVEGGIRLVGAHTDSPCLRVKPSPELQRQGYFQLGVEVYGGALLAPWFDRDLSLAGRVTYRRDGKVESQLIDFYQPIAVIPNLAIHLNREANMGWAINAQNELPPILAQLASSETADFRALLAEQLAMEHDFNPDAVLDYELSFYDTQSAAIVGLNQDFIASARLDNLLSCYAGLQALIDSSDEETCVLVCTDHEEVGSCSACGADGPFLEQVLRRVLPEGDDFVRSIQRSLLVSADNAHGVHPNYADKHDGNHGPKLNAGPVIKINSNQRYATNSETAGFFRHLCLENEVPVQSFVVRSDMACGSTIGPITASQLGVRTVDIGLPTFAMHSIRELAGSHDVDHLVKVLTAFYSSPELP.

The Zn(2+) site is built by H82, H156, and H401.

Belongs to the peptidase M18 family. Zn(2+) serves as cofactor.

The sequence is that of Probable M18 family aminopeptidase 2 from Ectopseudomonas mendocina (strain ymp) (Pseudomonas mendocina).